The chain runs to 189 residues: EIEFTRTMHGIMRNISHFCSRTKSRTWGKDGWPKIVVCVIADGRQKVHPRTLNALAALGVYQDGIAKNVVNKKEVTAHVYEYTTQVSLDEGMKFKGAEKGIVPCQMIFCLKEQNKRKLNSHRWFFNAFGRALTPNVCILLDVGTKPDSKALYHLWKAFDQDSNVAGAAGEIKADKGKGWLGLLNPLVAS.

The protein belongs to the chitin synthase family. Class II subfamily.

The protein resides in the cell membrane. It catalyses the reaction [(1-&gt;4)-N-acetyl-beta-D-glucosaminyl](n) + UDP-N-acetyl-alpha-D-glucosamine = [(1-&gt;4)-N-acetyl-beta-D-glucosaminyl](n+1) + UDP + H(+). Polymerizes chitin, a structural polymer of the cell wall and septum, by transferring the sugar moiety of UDP-GlcNAc to the non-reducing end of the growing chitin polymer. In Exophiala exophialae (Black yeast-like fungus), this protein is Chitin synthase 2 (CHS2).